A 272-amino-acid polypeptide reads, in one-letter code: Alkaline ceramidase (272 aa).

2 helical membrane passes run 34-54 and 61-81; these read FANT…IMLL and VNGG…ASTY. A Zn(2+)-binding site is contributed by histidine 83. Transmembrane regions (helical) follow at residues 96–116, 124–144, 148–168, and 183–203; these read LSLV…MKWF, LTLV…LCFL, LNAI…NYEG, and ILAL…LCDF. 2 residues coordinate Zn(2+): histidine 213 and histidine 217. Residues 214-234 form a helical membrane-spanning segment; it reads ALFHLLAGLAGYTIFIMFSMI. Asparagine 256 is a glycosylation site (N-linked (GlcNAc...) asparagine).

The protein belongs to the alkaline ceramidase family. Zn(2+) serves as cofactor.

It is found in the membrane. The catalysed reaction is an N-acyl-sphingoid base + H2O = a sphingoid base + a fatty acid. It catalyses the reaction an N-acylsphing-4-enine + H2O = sphing-4-enine + a fatty acid. It carries out the reaction an N-acyl-15-methylhexadecasphing-4-enine + H2O = 15-methylhexadecasphing-4-enine + a fatty acid. It functions in the pathway lipid metabolism; sphingolipid metabolism. Hydrolyzes the sphingolipid ceramide into sphingoid base and free fatty acid. C.elegans contain specific sphingoid bases, which are unique or different in structure compared to the sphingoid bases found in other animals. Two examples of these distinctive compounds are: 15-methylhexadecasphinganine and 15-methylhexadecasphing-4-enine. This is Alkaline ceramidase from Caenorhabditis elegans.